The sequence spans 366 residues: Ribosomal RNA large subunit methyltransferase M (366 aa).

Residues S188, 221-224 (CPGG), D240, D260, and D277 contribute to the S-adenosyl-L-methionine site. Residue K306 is the Proton acceptor of the active site.

It belongs to the class I-like SAM-binding methyltransferase superfamily. RNA methyltransferase RlmE family. RlmM subfamily. Monomer.

The protein resides in the cytoplasm. The catalysed reaction is cytidine(2498) in 23S rRNA + S-adenosyl-L-methionine = 2'-O-methylcytidine(2498) in 23S rRNA + S-adenosyl-L-homocysteine + H(+). Functionally, catalyzes the 2'-O-methylation at nucleotide C2498 in 23S rRNA. In Cronobacter sakazakii (strain ATCC BAA-894) (Enterobacter sakazakii), this protein is Ribosomal RNA large subunit methyltransferase M.